A 569-amino-acid chain; its full sequence is Cytochrome P450 monooxygenase abl1 (569 aa).

Cysteine 464 provides a ligand contact to heme.

It belongs to the cytochrome P450 family. Requires heme as cofactor.

The protein operates within hormone biosynthesis. Cytochrome P450 monooxygenase; part of the gene cluster that mediates the biosynthesis of abscisic acid (ABA), a phytohormone that acts antagonistically toward salicylic acid (SA), jasmonic acid (JA) and ethylene (ETH) signaling, to impede plant defense responses. The first step of the pathway catalyzes the reaction from farnesyl diphosphate to alpha-ionylideneethane performed by the alpha-ionylideneethane synthase abl3 via a three-step reaction mechanism involving 2 neutral intermediates, beta-farnesene and allofarnesene. The cytochrome P450 monooxygenase abl1 might then be involved in the conversion of alpha-ionylideneethane to alpha-ionylideneacetic acid. Alpha-ionylideneacetic acid is further converted to abscisic acid in 2 steps involving the cytochrome P450 monooxygenase abl2 and the short-chain dehydrogenase/reductase abl4, via the intermediates 1'-deoxy-ABA or 1',4'-trans-diol-ABA, depending on the order of action of these 2 enzymes. Abl2 is responsible for the hydroxylation of carbon atom C-1' and abl4 might be involved in the oxidation of the C-4' carbon atom. This Leptosphaeria maculans (strain JN3 / isolate v23.1.3 / race Av1-4-5-6-7-8) (Blackleg fungus) protein is Cytochrome P450 monooxygenase abl1.